We begin with the raw amino-acid sequence, 288 residues long: MAFFFKGAVTSSPVKTRRQEAEYICHSLDSSHFSDSSFECFSTNPLTGSVCACRRSPRLLSNGYYVLTEDSFNTDDEGNVTLTPSHTSVTYKENLVRIFRRKRRAKRSLASLLSDMSQSCQSWLEGSVFRRSEPITPIQSSWEEFDHSYEKESPISFTYDPIDPVSSPDKLPPQTQLEEEEPQCDSCATHEHFSQSVSGLLDVPPPSVCHLDSYGSSSKTSSENVFMKVLLLILTLCLCIAISSGWLLGGVSAAVAFVVLLSSICVSKPGSSVRWRRAKTEDITSRNE.

A run of 2 helical transmembrane segments spans residues 229-249 (VLLL…WLLG) and 250-270 (GVSA…SKPG).

Belongs to the TMEM71 family.

The protein resides in the membrane. The protein is Transmembrane protein 71 (tmem71) of Danio rerio (Zebrafish).